The following is a 326-amino-acid chain: UPF0324 membrane protein PBPRB0970 (326 aa).

The next 10 membrane-spanning stretches (helical) occupy residues 27–49 (FFIIALLCLLPIISSPVALILGF), 70–89 (LLAYSIIGLGFGIHLDQAIA), 94–116 (GFGLIVGSIFFTLIFGWFLTKAL), 123–145 (GHLIASGTAICGGSAIAAVAPAI), 155–177 (ALATVFVLNSIALFIFPAIGHLL), 184–206 (FGTWAAIAIHDTSSVVGAAGAYG), 216–235 (IKLARALWIVPIAFLSALLF), 242–261 (IGIPYFILFYCLAIVFAHFV), 271–290 (IFVASKRLLVVCLFLIGSGI), and 303–325 (LLLGVLLWVAIGVGSLSYILLNV).

Belongs to the UPF0324 family.

The protein resides in the cell membrane. This Photobacterium profundum (strain SS9) protein is UPF0324 membrane protein PBPRB0970.